Here is a 323-residue protein sequence, read N- to C-terminus: MSNLTLSQFLQQEKGNLTPELAQVIDTIAATCKTIDQALQKGALAGILGSAGNENVQGETQKKLDVISNDYLIDALKVHPHVGGLASEELDDFTLAQENGEYLVLFDPLDGSSNIDINMCVGTIFSILPAKNAVTQAQDFMQAGTQQVAAGYVLYGPSTMMALTVGNGVAFFTLDPETQTFLLTTENVQVSADTQEFAINASNQRHWEQPVKQYIEELLAGKTSVREKDFNMRWVACMVGDVHRILCRGGIFLYPYDLKDPKKAGRLRLMYEANPMSMLIEQAGGASTTGRVRILEIEPTELHQRVPVIIGSKNEVERVTSYH.

Residues Glu88, Asp107, Leu109, and Asp110 each contribute to the Mg(2+) site. Substrate-binding positions include 110 to 113 (DGSS) and Asn200. Glu272 is a Mg(2+) binding site.

This sequence belongs to the FBPase class 1 family. As to quaternary structure, homotetramer. Requires Mg(2+) as cofactor.

It localises to the cytoplasm. The catalysed reaction is beta-D-fructose 1,6-bisphosphate + H2O = beta-D-fructose 6-phosphate + phosphate. It participates in carbohydrate biosynthesis; gluconeogenesis. In Acinetobacter baumannii (strain ATCC 17978 / DSM 105126 / CIP 53.77 / LMG 1025 / NCDC KC755 / 5377), this protein is Fructose-1,6-bisphosphatase class 1.